We begin with the raw amino-acid sequence, 443 residues long: Protein king tubby (443 aa).

Disordered regions lie at residues 57-85 and 98-189; these read TNGS…LSTI and HELE…ESEG. Positions 68-85 are enriched in polar residues; the sequence is AVNTSRNHSNNMRSLSTI. The segment covering 113-128 has biased composition (low complexity); that stretch reads QHQQSASHSANSTQSQ. A Phosphoserine modification is found at Ser136. Over residues 148–160 the composition is skewed to low complexity; the sequence is NRNVAAAAPVRPA. The segment covering 177 to 186 has biased composition (gly residues); sequence NGTGNGTGGE.

The protein belongs to the TUB family.

The protein resides in the cytoplasm. It localises to the nucleus. It is found in the cell projection. Its subcellular location is the cilium membrane. The protein localises to the rhabdomere. The chain is Protein king tubby from Drosophila yakuba (Fruit fly).